A 203-amino-acid chain; its full sequence is Imidazoleglycerol-phosphate dehydratase (203 aa).

Belongs to the imidazoleglycerol-phosphate dehydratase family.

The protein localises to the cytoplasm. The enzyme catalyses D-erythro-1-(imidazol-4-yl)glycerol 3-phosphate = 3-(imidazol-4-yl)-2-oxopropyl phosphate + H2O. It participates in amino-acid biosynthesis; L-histidine biosynthesis; L-histidine from 5-phospho-alpha-D-ribose 1-diphosphate: step 6/9. This chain is Imidazoleglycerol-phosphate dehydratase, found in Salinispora tropica (strain ATCC BAA-916 / DSM 44818 / JCM 13857 / NBRC 105044 / CNB-440).